Consider the following 834-residue polypeptide: Protein EFR3 homolog cmp44E (834 aa).

Residues Asn-120–Asn-156 form an HEAT repeat. A helical transmembrane segment spans residues Leu-595–Ile-612.

Belongs to the EFR3 family. As to expression, expression during embryogenesis is ubiquitous with notably higher levels in the CNS and brain.

It is found in the membrane. Functionally, an essential gene required for embryogenesis; required for cell viability. The polypeptide is Protein EFR3 homolog cmp44E (stmA) (Drosophila melanogaster (Fruit fly)).